The chain runs to 581 residues: CUE domain-containing protein 3 (581 aa).

The CUE domain occupies 271–314 (INPGDVKSLIELFPQLSVEEAVEHLSASLGNIDAACESVITSSL). The residue at position 386 (Tyr-386) is a Phosphotyrosine. Disordered stretches follow at residues 422–448 (DDTY…ASSK) and 522–581 (GSGN…SNEK). Over residues 522-542 (GSGNTNIGSLRQTKFKQSNYT) the composition is skewed to polar residues. The span at 552–581 (QHRPSRPSKNPSLKKKKYVRTKPKKASNEK) shows a compositional bias: basic residues.

Component of the RQT (ribosome quality control trigger) complex.

The protein localises to the cytoplasm. It localises to the nucleus. Involved in activation of the ribosome quality control (RQC) pathway, a pathway that degrades nascent peptide chains during problematic translation. Specifically recognizes and binds RPS20/uS10 ubiquitinated by HEL2, promoting recruitment of the RQT (ribosome quality control trigger) complex on stalled ribosomes, followed by disassembly of stalled ribosomes. This is CUE domain-containing protein 3 from Schizosaccharomyces pombe (strain 972 / ATCC 24843) (Fission yeast).